Here is a 290-residue protein sequence, read N- to C-terminus: Lipid phosphate phosphatase 2 (290 aa).

3 consecutive transmembrane segments (helical) span residues 26 to 46, 69 to 89, and 93 to 113; these read WLIL…EPFH, WAVP…YYFI, and VYDL…TGVI. Asn142 carries N-linked (GlcNAc...) asparagine glycosylation. 3 helical membrane passes run 162–182, 193–213, and 226–246; these read SFPS…SLYL, GHVA…LVGV, and VFGG…QFFP.

This sequence belongs to the PA-phosphatase related phosphoesterase family. Expressed in roots, stems, leaves, buds, flowers and siliques.

Its subcellular location is the membrane. PA phosphatase activity not inhibited by N-ethylmaleimide. Its function is as follows. May play a general 'housekeeping role' in lipid metabolism. Exhibits both diacylglycerol pyrophosphate (DGPP) phosphatase and phosphatidate (PA) phosphatase activities with no preference for either substrate. May play a role downstream of the ABA signaling pathway during seed germination and in stomatal movement in leaves. The chain is Lipid phosphate phosphatase 2 (LPP2) from Arabidopsis thaliana (Mouse-ear cress).